The primary structure comprises 382 residues: FK506-binding protein 4 (382 aa).

A disordered region spans residues 139–274 (GLEVDEEIES…KEEPKKKITK (136 aa)). Residues 141-173 (EVDEEIESDEEVESDEEIESDEEIESEEEEEEP) are compositionally biased toward acidic residues. Composition is skewed to basic and acidic residues over residues 180–190 (RPAEEVKEIAS) and 196–270 (EKKE…EPKK). The PPIase FKBP-type domain maps to 295-382 (GQRVGMRYIG…VFDVKLLSMK (88 aa)).

The protein belongs to the FKBP-type PPIase family. FKBP3/4 subfamily. In terms of assembly, binds to histones H3 and H4.

Its subcellular location is the nucleus. It carries out the reaction [protein]-peptidylproline (omega=180) = [protein]-peptidylproline (omega=0). Inhibited by both FK506 and rapamycin. In terms of biological role, PPIase that acts as a histone chaperone. Histone proline isomerase that increases the rate of cis-trans isomerization at prolines on the histone H3 N-terminal tail. Proline isomerization influences H3 methylation thereby regulating gene expression. This Rhizopus delemar (strain RA 99-880 / ATCC MYA-4621 / FGSC 9543 / NRRL 43880) (Mucormycosis agent) protein is FK506-binding protein 4 (FKBP4).